Consider the following 233-residue polypeptide: Large ribosomal subunit protein uL1 (233 aa).

This sequence belongs to the universal ribosomal protein uL1 family. As to quaternary structure, part of the 50S ribosomal subunit.

Functionally, binds directly to 23S rRNA. The L1 stalk is quite mobile in the ribosome, and is involved in E site tRNA release. Protein L1 is also a translational repressor protein, it controls the translation of the L11 operon by binding to its mRNA. The protein is Large ribosomal subunit protein uL1 of Rhizobium etli (strain ATCC 51251 / DSM 11541 / JCM 21823 / NBRC 15573 / CFN 42).